A 142-amino-acid chain; its full sequence is Large ribosomal subunit protein uL11 (142 aa).

It belongs to the universal ribosomal protein uL11 family. As to quaternary structure, part of the ribosomal stalk of the 50S ribosomal subunit. Interacts with L10 and the large rRNA to form the base of the stalk. L10 forms an elongated spine to which L12 dimers bind in a sequential fashion forming a multimeric L10(L12)X complex. One or more lysine residues are methylated.

Functionally, forms part of the ribosomal stalk which helps the ribosome interact with GTP-bound translation factors. The chain is Large ribosomal subunit protein uL11 from Pelotomaculum thermopropionicum (strain DSM 13744 / JCM 10971 / SI).